A 281-amino-acid chain; its full sequence is Bidirectional sugar transporter SWEET14 (281 aa).

Over 1 to 6 the chain is Extracellular; the sequence is MVLTHN. Residues 7–27 form a helical membrane-spanning segment; the sequence is VLAVTFGVLGNIISFIVFLAP. In terms of domain architecture, MtN3/slv 1 spans 11 to 97; sequence TFGVLGNIIS…ILFITYANKK (87 aa). At 28 to 42 the chain is on the cytoplasmic side; that stretch reads VPTFVRICKKKSIEG. A helical membrane pass occupies residues 43–63; that stretch reads FESLPYVSALFSAMLWIYYAL. Over 64-70 the chain is Extracellular; that stretch reads QKDGAGF. Residues 71–91 form a helical membrane-spanning segment; that stretch reads LLITINAVGCFIETIYIILFI. Residues 92–104 lie on the Cytoplasmic side of the membrane; it reads TYANKKARISTLK. Residues 105–125 form a helical membrane-spanning segment; that stretch reads VLGLLNFLGFAAIILVCELLT. The Extracellular portion of the chain corresponds to 126-132; it reads KGSNREK. A helical transmembrane segment spans residues 133-153; it reads VLGGICVGFSVCVFAAPLSIM. One can recognise a MtN3/slv 2 domain in the interval 133 to 216; it reads VLGGICVGFS…MILYVIFKYY (84 aa). Residues 154–166 lie on the Cytoplasmic side of the membrane; sequence RVVIRTKSVEFMP. Residues 167-187 form a helical membrane-spanning segment; it reads FSLSLFLTISAITWLFYGLAI. Topologically, residues 188 to 192 are extracellular; it reads KDFYV. Residues 193–213 traverse the membrane as a helical segment; the sequence is ALPNILGAFLGAVQMILYVIF. Residues 214 to 281 are Cytoplasmic-facing; it reads KYYKTPLVVD…EDQMDKKMPN (68 aa). The span at 244-259 shows a compositional bias: polar residues; the sequence is TPASGDLTVQPQTNPD. Residues 244–281 are disordered; sequence TPASGDLTVQPQTNPDVSHPIKTHGGDLEDQMDKKMPN. Over residues 267–281 the composition is skewed to basic and acidic residues; the sequence is HGGDLEDQMDKKMPN.

The protein belongs to the SWEET sugar transporter family. In terms of assembly, forms homooligomers and/or heterooligomers.

The protein resides in the cell membrane. Functionally, mediates both low-affinity uptake and efflux of sugar across the plasma membrane. The sequence is that of Bidirectional sugar transporter SWEET14 from Arabidopsis thaliana (Mouse-ear cress).